The following is a 60-amino-acid chain: MAVQQNKKSRSARDMRRSHDALEANALSVEKSTGEVHLRHHVSPDGFYRGRKVIDKGSDE.

It belongs to the bacterial ribosomal protein bL32 family.

The protein is Large ribosomal subunit protein bL32 of Azotobacter vinelandii (strain DJ / ATCC BAA-1303).